The primary structure comprises 70 residues: Peptide Hp1035 (70 aa).

An N-terminal signal peptide occupies residues 1–23 (MKTQFVILLVALVLFQMFAQSEA). Residue F36 is modified to Phenylalanine amide. Positions 40 to 70 (GLQDLDMDDLDQLFDGEISQADINFLNQLMR) are excised as a propeptide.

It belongs to the non-disulfide-bridged peptide (NDBP) superfamily. Short antimicrobial peptide (group 4) family. In terms of tissue distribution, expressed by the venom gland.

The protein resides in the secreted. Its subcellular location is the target cell membrane. Amphipathic peptide with antimicrobial activity. The polypeptide is Peptide Hp1035 (Heterometrus petersii (Asian forest scorpion)).